We begin with the raw amino-acid sequence, 324 residues long: Holliday junction branch migration complex subunit RuvB (324 aa).

A large ATPase domain (RuvB-L) region spans residues 1–168 (MEDLALRPKT…FGIVEHLEYY (168 aa)). ATP contacts are provided by residues Leu-6, Arg-7, Gly-48, Lys-51, Thr-52, Thr-53, 115 to 117 (EDF), Arg-158, Tyr-168, and Arg-205. Position 52 (Thr-52) interacts with Mg(2+). Residues 169–239 (TPEELAQGVM…RALEALAALG (71 aa)) are small ATPAse domain (RuvB-S). A head domain (RuvB-H) region spans residues 242 to 324 (ELGLEKRDRE…PPPVGPLLEP (83 aa)). Arg-297 and Arg-302 together coordinate DNA.

The protein belongs to the RuvB family. Homohexamer. Forms an RuvA(8)-RuvB(12)-Holliday junction (HJ) complex. HJ DNA is sandwiched between 2 RuvA tetramers; dsDNA enters through RuvA and exits via RuvB. An RuvB hexamer assembles on each DNA strand where it exits the tetramer. Each RuvB hexamer is contacted by two RuvA subunits (via domain III) on 2 adjacent RuvB subunits; this complex drives branch migration. In the full resolvosome a probable DNA-RuvA(4)-RuvB(12)-RuvC(2) complex forms which resolves the HJ.

It localises to the cytoplasm. The catalysed reaction is ATP + H2O = ADP + phosphate + H(+). With respect to regulation, the ATPase activity of RuvB is enhanced by RuvA. Its function is as follows. The RuvA-RuvB-RuvC complex processes Holliday junction (HJ) DNA during genetic recombination and DNA repair, while the RuvA-RuvB complex plays an important role in the rescue of blocked DNA replication forks via replication fork reversal (RFR). RuvA specifically binds to HJ cruciform DNA, conferring on it an open structure. The RuvB hexamer acts as an ATP-dependent pump, pulling dsDNA into and through the RuvAB complex. RuvB forms 2 homohexamers on either side of HJ DNA bound by 1 or 2 RuvA tetramers; 4 subunits per hexamer contact DNA at a time. Coordinated motions by a converter formed by DNA-disengaged RuvB subunits stimulates ATP hydrolysis and nucleotide exchange. Immobilization of the converter enables RuvB to convert the ATP-contained energy into a lever motion, pulling 2 nucleotides of DNA out of the RuvA tetramer per ATP hydrolyzed, thus driving DNA branch migration. The RuvB motors rotate together with the DNA substrate, which together with the progressing nucleotide cycle form the mechanistic basis for DNA recombination by continuous HJ branch migration. Branch migration allows RuvC to scan DNA until it finds its consensus sequence, where it cleaves and resolves cruciform DNA. Functionally, has Mg(2+)-, DNA-dependent ATPase activity; dsDNA and supercoiled DNA but not ssDNA stimulate activity. Binds to linear dsDNA in the absence of ATP or ATP-gamma-S. This subunit can promote Holliday junction migration alone in vitro. Partially complements an E.coli deletion for UV sensitivity. The protein is Holliday junction branch migration complex subunit RuvB of Thermus thermophilus.